Consider the following 468-residue polypeptide: MTVVTRFAPSPTGFLHIGGARTALFNWLFARHHGGRFLLRIEDTDRVRSTPEAVAAIFDGLEWLGLDWDEEPTFQFARAARHAEAAHELVAKGLAYRCYCTPDELTAMREEQKAKGLPPRYNGLWRDRDPSEAPAGVAPVIRLKAPQDGETTITDSVQGAVTVANNQLDDMILLRSDGTPTYMLSVVVDDHDMGVTHVIRGDDHLTNAFRQTQLYWALGWETPVFAHIPLIHGADGAKLSKRHGALGAEAYRDMGFLPEALRNYLVRLGWAHGDDEVFTTEQAVEWFSLESIGRSPSRFDMQKLTALNGSYMRETDDDRLTALLVPRLESTLGLDIPAAGHALLRAGMAGLKERAKTLVELADLAAFYVRPRPLAIDAKAEKALDDEGRTILAALIDKLDDFSPWTRDSLENLARVMSEERGVKLGKVAQPIRAALTGSTVSPPIFEVMEILGPDETLGRLRDAQSHS.

The 'HIGH' region motif lies at 9 to 19 (PSPTGFLHIGG). The short motif at 238-242 (KLSKR) is the 'KMSKS' region element. K241 is an ATP binding site.

Belongs to the class-I aminoacyl-tRNA synthetase family. Glutamate--tRNA ligase type 1 subfamily. Monomer.

It is found in the cytoplasm. The catalysed reaction is tRNA(Glu) + L-glutamate + ATP = L-glutamyl-tRNA(Glu) + AMP + diphosphate. In terms of biological role, catalyzes the attachment of glutamate to tRNA(Glu) in a two-step reaction: glutamate is first activated by ATP to form Glu-AMP and then transferred to the acceptor end of tRNA(Glu). This Rhodospirillum rubrum (strain ATCC 11170 / ATH 1.1.1 / DSM 467 / LMG 4362 / NCIMB 8255 / S1) protein is Glutamate--tRNA ligase 2.